The sequence spans 392 residues: Elongation factor Tu (392 aa).

One can recognise a tr-type G domain in the interval 10–202; it reads KVHVNVGTIG…VLDEYIEDPI (193 aa). Positions 19–26 are G1; that stretch reads GHVDHGKT. Position 19–26 (19–26) interacts with GTP; sequence GHVDHGKT. Thr-26 lines the Mg(2+) pocket. The G2 stretch occupies residues 60-64; sequence GITIN. Residues 81-84 are G3; sequence DCPG. GTP contacts are provided by residues 81–85 and 136–139; these read DCPGH and NKCD. The segment at 136 to 139 is G4; it reads NKCD. The tract at residues 174–176 is G5; that stretch reads SAL.

Belongs to the TRAFAC class translation factor GTPase superfamily. Classic translation factor GTPase family. EF-Tu/EF-1A subfamily. As to quaternary structure, monomer.

The protein resides in the cytoplasm. The enzyme catalyses GTP + H2O = GDP + phosphate + H(+). Its function is as follows. GTP hydrolase that promotes the GTP-dependent binding of aminoacyl-tRNA to the A-site of ribosomes during protein biosynthesis. The chain is Elongation factor Tu from Apple proliferation phytoplasma.